A 168-amino-acid chain; its full sequence is Ribosome maturation factor RimM (168 aa).

The PRC barrel domain maps to 95-168 (KEGDYYWTDL…IIVVEWDADF (74 aa)).

Belongs to the RimM family. Binds ribosomal protein uS19.

The protein localises to the cytoplasm. Functionally, an accessory protein needed during the final step in the assembly of 30S ribosomal subunit, possibly for assembly of the head region. Essential for efficient processing of 16S rRNA. May be needed both before and after RbfA during the maturation of 16S rRNA. It has affinity for free ribosomal 30S subunits but not for 70S ribosomes. This is Ribosome maturation factor RimM from Coxiella burnetii (strain CbuK_Q154) (Coxiella burnetii (strain Q154)).